Consider the following 156-residue polypeptide: Ribosome maturation factor RimP (156 aa).

It belongs to the RimP family.

The protein resides in the cytoplasm. In terms of biological role, required for maturation of 30S ribosomal subunits. The polypeptide is Ribosome maturation factor RimP (Dictyoglomus turgidum (strain DSM 6724 / Z-1310)).